The primary structure comprises 561 residues: Bifunctional NAD(P)H-hydrate repair enzyme (561 aa).

Positions 1–241 (MLSRISERCT…WMIAAERMDA (241 aa)) are NAD(P)H-hydrate epimerase. Positions 29-235 (LRDAEPAAAA…SLGLEEWMIA (207 aa)) constitute a YjeF N-terminal domain. Residues 77–81 (NNGGD) form an NADPHX 1; for epimerase activity region. 2 residues coordinate K(+): N78 and D145. Positions 149 to 155 (GTGISGP) are NADPHX 1; for epimerase activity. (6S)-NADPHX is bound by residues Y160 and D178. Residue S181 participates in K(+) binding. The YjeF C-terminal domain occupies 249–548 (LGDVYGYFST…PRIPFIVNAS (300 aa)). The tract at residues 249–561 (LGDVYGYFST…SATQQRPSGL (313 aa)) is ADP-dependent (S)-NAD(P)H-hydrate dehydratase. G351 contacts (6S)-NADPHX. An NADPHX 2; for dehydratase activity region spans residues 417–423 (HPGEAAR). Residues 454–458 (KGPGT) and 475–484 (NAGMASGGMG) contribute to the ADP site. D485 lines the (6S)-NADPHX pocket.

This sequence in the N-terminal section; belongs to the NnrE/AIBP family. The protein in the C-terminal section; belongs to the NnrD/CARKD family. The cofactor is K(+).

The enzyme catalyses (6S)-NADHX + ADP = AMP + phosphate + NADH + H(+). It catalyses the reaction (6S)-NADPHX + ADP = AMP + phosphate + NADPH + H(+). The catalysed reaction is (6R)-NADHX = (6S)-NADHX. It carries out the reaction (6R)-NADPHX = (6S)-NADPHX. In terms of biological role, bifunctional enzyme that catalyzes the epimerization of the S- and R-forms of NAD(P)HX and the dehydration of the S-form of NAD(P)HX at the expense of ADP, which is converted to AMP. This allows the repair of both epimers of NAD(P)HX, a damaged form of NAD(P)H that is a result of enzymatic or heat-dependent hydration. The protein is Bifunctional NAD(P)H-hydrate repair enzyme of Leishmania braziliensis.